The primary structure comprises 65 residues: Large ribosomal subunit protein bL31 (65 aa).

Residues cysteine 16, cysteine 18, cysteine 36, and cysteine 39 each contribute to the Zn(2+) site.

This sequence belongs to the bacterial ribosomal protein bL31 family. Type A subfamily. As to quaternary structure, part of the 50S ribosomal subunit. Requires Zn(2+) as cofactor.

Its function is as follows. Binds the 23S rRNA. This chain is Large ribosomal subunit protein bL31, found in Brevibacillus brevis (strain 47 / JCM 6285 / NBRC 100599).